A 200-amino-acid polypeptide reads, in one-letter code: uncharacterized protein (200 aa).

Residues 104–124 (SNLLICFLFLCGLYHISVFTG) traverse the membrane as a helical segment.

It localises to the membrane. This is an uncharacterized protein from Escherichia coli (strain K12).